A 380-amino-acid chain; its full sequence is DNA replication and repair protein RecF (380 aa).

Residue 30-37 participates in ATP binding; that stretch reads GENAQGKT.

This sequence belongs to the RecF family.

It localises to the cytoplasm. Functionally, the RecF protein is involved in DNA metabolism; it is required for DNA replication and normal SOS inducibility. RecF binds preferentially to single-stranded, linear DNA. It also seems to bind ATP. The sequence is that of DNA replication and repair protein RecF from Synechococcus sp. (strain JA-3-3Ab) (Cyanobacteria bacterium Yellowstone A-Prime).